Reading from the N-terminus, the 5634-residue chain is Hemicentin-1 (5634 aa).

Residues 1 to 21 form the signal peptide; the sequence is MIAQEVVHTVFLVALFRSSLA. A VWFA domain is found at 41–216; that stretch reads TLAFVFDVTG…EVLKWVEEAV (176 aa). Ig-like C2-type domains lie at 431–517, 520–607, 612–697, 702–788, 793–883, 890–976, 981–1067, 1072–1166, 1171–1254, 1261–1353, 1357–1446, 1451–1540, 1545–1633, 1638–1723, 1732–1820, 1825–1913, 1918–2006, 2011–2096, 2103–2189, 2194–2284, 2289–2378, 2383–2472, 2477–2565, 2570–2661, 2665–2762, 2765–2863, 2867–2958, 2962–3050, and 3055–3145; these read PKVT…FDVS, PPII…VFLT, PKVT…STLR, PKLV…LTLD, PVFI…TTVT, PLIG…TSVA, PSIQ…VQLT, PRVF…VKLS, PKIQ…AEVT, PSVE…YNLK, PPVI…FSVN, PSIL…IKLT, PSIK…FHVD, PTIE…REIK, PAVE…FEVT, PTIK…TQLH, PSLD…YSLQ, PSIS…RDID, PNIM…YNVN, PSIY…YNLQ, PSIT…YDLS, PSII…FGLS, PHIV…FRLN, PTIA…YEVK, PPII…VNIQ, PSFQ…YDVH, PPVI…FNLN, PPSV…VSLT, and PSIK…FHLN. Disulfide bonds link Cys451/Cys499 and Cys541/Cys591. Thr615 carries O-linked (GalNAc...) threonine glycosylation. Disulfide bonds link Cys633/Cys681, Cys723/Cys772, Cys814/Cys867, Cys911/Cys960, Cys1002/Cys1051, Cys1101/Cys1150, Cys1192/Cys1240, Cys1287/Cys1337, Cys1381/Cys1430, Cys1474/Cys1524, and Cys1568/Cys1617. 2 O-linked (GalNAc...) threonine glycosylation sites follow: Thr1292 and Thr1386. Thr1639 is a glycosylation site (O-linked (GalNAc...) threonine). 2 disulfides stabilise this stretch: Cys1662–Cys1711 and Cys1755–Cys1804. Thr1826 carries an O-linked (GalNAc...) threonine glycan. Disulfide bonds link Cys1847/Cys1897, Cys1941/Cys1990, Cys2032/Cys2082, Cys2124/Cys2173, Cys2217/Cys2268, Cys2313/Cys2362, Cys2407/Cys2456, Cys2500/Cys2549, Cys2596/Cys2645, Cys2695/Cys2744, Cys2798/Cys2847, Cys2893/Cys2942, Cys2985/Cys3034, and Cys3080/Cys3129. Thr3151 carries O-linked (GalNAc...) threonine glycosylation. Ig-like C2-type domains lie at 3155-3227, 3244-3334, 3339-3428, 3433-3515, 3526-3614, 3619-3707, 3712-3798, 3803-3891, 3896-3982, 3987-4073, 4077-4163, 4168-4252, 4259-4332, 4347-4434, and 4439-4526; these read PETE…VASN, PSVA…FNLN, PKIR…YSLQ, PNMD…GEVS, PHIN…YLVR, PNIA…FNLT, PSIG…IDLQ, PSIA…VDLT, PTIA…VTLR, PVIQ…VKLN, PPVI…STLT, PRIQ…RIVT, PTFT…AENS, PPVF…MSLT, and PIIT…VIVQ. Intrachain disulfides connect Cys3172–Cys3223, Cys3267–Cys3318, Cys3363–Cys3412, Cys3456–Cys3505, Cys3549–Cys3598, Cys3642–Cys3691, Cys3733–Cys3782, and Cys3824–Cys3875. A glycan (O-linked (GalNAc...) threonine) is linked at Thr3897. Cystine bridges form between Cys3917–Cys3966, Cys4008–Cys4057, Cys4099–Cys4147, Cys4189–Cys4238, Cys4280–Cys4327, Cys4370–Cys4418, Cys4460–Cys4508, Cys4540–Cys4577, Cys4544–Cys4582, Cys4555–Cys4567, Cys4597–Cys4634, Cys4601–Cys4639, Cys4612–Cys4624, Cys4654–Cys4691, Cys4658–Cys4696, Cys4669–Cys4681, Cys4711–Cys4748, Cys4715–Cys4753, Cys4726–Cys4738, Cys4768–Cys4805, Cys4772–Cys4810, Cys4783–Cys4795, Cys4825–Cys4862, Cys4829–Cys4867, and Cys4840–Cys4852. Thr4379 carries an O-linked (GalNAc...) threonine glycan. 6 consecutive TSP type-1 domains span residues 4528 to 4583, 4585 to 4640, 4642 to 4697, 4699 to 4754, 4756 to 4811, and 4813 to 4868; these read HGGF…KLCP, DGHW…RPCP, HGVW…RHCP, DGRW…DPCP, HGNW…DMCP, and DGSW…QACP. The region spanning 4870 to 5092 is the Nidogen G2 beta-barrel domain; the sequence is GPQRARGSVI…SKGDRSNQCP (223 aa). Residues 5106-5145 form the EGF-like 1; calcium-binding domain; that stretch reads DEDECTAGNPCSHTCHNAIGAYYCSCPKGLTIAADGRTCQ. Disulfide bonds link Cys5110–Cys5120, Cys5116–Cys5129, and Cys5131–Cys5144. Residues 5146–5189 enclose the EGF-like 2; calcium-binding domain; it reads DIDECALGGHTCRAGQDCDNTIGSYRCVVHCGTGFRRTSDGLSC. In terms of domain architecture, EGF-like 3; calcium-binding spans 5191–5228; the sequence is DINECQESSPCHQRCFNVIGSFHCGCEAGYQLKGRKCI. Cystine bridges form between Cys5195–Cys5205, Cys5201–Cys5214, and Cys5216–Cys5227. One can recognise an EGF-like 4; calcium-binding domain in the interval 5229 to 5269; sequence DVNECRQNVCRPDQHCKNTRGGYKCIDLCPSGMTKAENGTC. The 36-residue stretch at 5271-5306 folds into the EGF-like 5; calcium-binding domain; it reads DIDECKDGTHQCRYNQICENTRGSYRCACPRGYRSQ. Disulfide bonds link Cys5275–Cys5288, Cys5282–Cys5297, Cys5318–Cys5329, Cys5325–Cys5338, Cys5340–Cys5353, Cys5435–Cys5445, Cys5441–Cys5454, and Cys5456–Cys5469. The region spanning 5314 to 5354 is the EGF-like 6; calcium-binding domain; that stretch reads DINECEQVPKPCAHQCSNSPGSFKCICLPGQQLLGDGKSCA. An EGF-like 7; calcium-binding domain is found at 5431–5470; it reads DIDECQNRDTCQHECKNTIGSYQCVCPPGYRLMLNGKTCQ.

As to expression, in the kidney, expressed in the glomerulus (at protein level). Expressed in whisker and hair follicles, eye, tongue, and splenic and lymph node conduits (at protein level). In the embryo, localizes to the cleavage furrow at the two-cell stage (at protein level). In neonatal skin, expressed throughout the dermis (at protein level). In adult skin, strongly concentrated at the dermal side of the basement membrane but not detectable in the deeper dermis. Shows tendon-specific localization at the myotendinous junction and is also detected in the perichondrium (at protein level). Expressed by chondrocytes residing in articular cartilage and the femoral growth plate of 52 week old mice (at protein level). Expressed in vascular endothelial cells in coronary arteries and sparsely in endocardial endothelium (at protein level). Expressed in skin, tongue, lung and eye. At 14.5 dpc, expressed in the vibrissae, dermis, forelimb, kidney, intestine, lung and iliac cartilage where expression is found mainly in mesenchymal cells.

It is found in the secreted. The protein localises to the extracellular space. It localises to the extracellular matrix. The protein resides in the basement membrane. Its subcellular location is the cytoplasm. It is found in the cell junction. The protein localises to the cleavage furrow. Functionally, involved in transforming growth factor beta-mediated rearrangement of the podocyte cytoskeleton which includes reduction of F-actin fibers and broadening, flattening and elongation of podocytes. Plays a role in basement membrane organization. May promote cleavage furrow maturation during cytokinesis in preimplantation embryos. May play a role in the architecture of adhesive and flexible epithelial cell junctions. May play a role during myocardial remodeling by imparting an effect on cardiac fibroblast migration. The protein is Hemicentin-1 of Mus musculus (Mouse).